The primary structure comprises 260 residues: MICOS complex subunit mic25-a (260 aa).

The segment at 1–92 is disordered; it reads MGGSESTGRK…KPTARGVGHQ (92 aa). Glycine 2 carries the N-myristoyl glycine lipid modification. Over residues 28–39 the composition is skewed to basic and acidic residues; it reads RLSDEVVNRMKD. The segment covering 48-64 has biased composition (low complexity); that stretch reads STSTASGTTSGPTTFPS. The stretch at 94–187 forms a coiled coil; it reads AEEDLYRRYE…LNSIEKKNLE (94 aa). A CHCH domain is found at 213–255; sequence DPVCMDLQSNILKCYAENKQERLNCSDLAKEYGKCVSAAQKNL. 2 consecutive short sequence motifs (cx9C motif) follow at residues 216 to 226 and 237 to 247; these read CMDLQSNILKC and CSDLAKEYGKC. 2 cysteine pairs are disulfide-bonded: cysteine 216/cysteine 247 and cysteine 226/cysteine 237.

It belongs to the MICOS complex subunit Mic19 family. Metazoan Mic25 subfamily. In terms of assembly, component of the mitochondrial contact site and cristae organizing system (MICOS) complex (also known as MINOS or MitOS complex).

The protein resides in the mitochondrion inner membrane. Its function is as follows. Component of the MICOS complex, a large protein complex of the mitochondrial inner membrane that plays crucial roles in the maintenance of crista junctions, inner membrane architecture, and formation of contact sites to the outer membrane. This is MICOS complex subunit mic25-a (chchd6-a) from Xenopus laevis (African clawed frog).